Consider the following 244-residue polypeptide: NAD(P)H-quinone oxidoreductase subunit K (244 aa).

Residues C51, C52, C116, and C147 each coordinate [4Fe-4S] cluster.

It belongs to the complex I 20 kDa subunit family. In terms of assembly, NDH-1 can be composed of about 15 different subunits; different subcomplexes with different compositions have been identified which probably have different functions. It depends on [4Fe-4S] cluster as a cofactor.

It is found in the cellular thylakoid membrane. It carries out the reaction a plastoquinone + NADH + (n+1) H(+)(in) = a plastoquinol + NAD(+) + n H(+)(out). It catalyses the reaction a plastoquinone + NADPH + (n+1) H(+)(in) = a plastoquinol + NADP(+) + n H(+)(out). Functionally, NDH-1 shuttles electrons from an unknown electron donor, via FMN and iron-sulfur (Fe-S) centers, to quinones in the respiratory and/or the photosynthetic chain. The immediate electron acceptor for the enzyme in this species is believed to be plastoquinone. Couples the redox reaction to proton translocation, and thus conserves the redox energy in a proton gradient. Cyanobacterial NDH-1 also plays a role in inorganic carbon-concentration. This is NAD(P)H-quinone oxidoreductase subunit K from Synechococcus sp. (strain JA-3-3Ab) (Cyanobacteria bacterium Yellowstone A-Prime).